Here is a 244-residue protein sequence, read N- to C-terminus: Maintenance of ploidy protein mob2 (244 aa).

A disordered region spans residues 14–45; sequence NRSKRHQNLSDASSSSGSFSKKSSTSQLVRTG. Positions 23–39 are enriched in low complexity; that stretch reads SDASSSSGSFSKKSSTS. Phosphoserine is present on residues Ser-46 and Ser-48.

It belongs to the MOB1/phocein family. As to quaternary structure, interacts with orb6.

It is found in the cytoplasm. The protein resides in the cell cortex. Its function is as follows. Required for coordinating polarized cell growth during interphase with the onset of mitosis. The chain is Maintenance of ploidy protein mob2 (mob2) from Schizosaccharomyces pombe (strain 972 / ATCC 24843) (Fission yeast).